We begin with the raw amino-acid sequence, 351 residues long: Protein Maqu_2141 (351 aa).

The protein belongs to the proline racemase family.

Functionally, displays neither proline racemase activity nor trans-4-hydroxy-L-proline (t4LHyp) epimerase activity nor t3LHyp dehydratase activity. In Marinobacter nauticus (strain ATCC 700491 / DSM 11845 / VT8) (Marinobacter aquaeolei), this protein is Protein Maqu_2141.